A 206-amino-acid chain; its full sequence is HTH-type transcriptional regulator BetI (206 aa).

The HTH tetR-type domain occupies 8–68; the sequence is PLRRKALVDA…ETIRSLLRDL (61 aa). The segment at residues 31 to 50 is a DNA-binding region (H-T-H motif); sequence TMSDIAREAGVSAALAHHYF.

It functions in the pathway amine and polyamine biosynthesis; betaine biosynthesis via choline pathway [regulation]. Repressor involved in the biosynthesis of the osmoprotectant glycine betaine. It represses transcription of the choline transporter BetT and the genes of BetAB involved in the synthesis of glycine betaine. This Agrobacterium fabrum (strain C58 / ATCC 33970) (Agrobacterium tumefaciens (strain C58)) protein is HTH-type transcriptional regulator BetI.